Here is a 181-residue protein sequence, read N- to C-terminus: Adenylyl-sulfate kinase (181 aa).

An ATP-binding site is contributed by 20-27 (GLSGAGKS). Ser94 serves as the catalytic Phosphoserine intermediate.

The protein belongs to the APS kinase family.

It carries out the reaction adenosine 5'-phosphosulfate + ATP = 3'-phosphoadenylyl sulfate + ADP + H(+). Its pathway is sulfur metabolism; hydrogen sulfide biosynthesis; sulfite from sulfate: step 2/3. Functionally, catalyzes the synthesis of activated sulfate. The chain is Adenylyl-sulfate kinase from Deinococcus geothermalis (strain DSM 11300 / CIP 105573 / AG-3a).